The sequence spans 250 residues: 5'-nucleotidase SurE (250 aa).

Positions 8, 9, 39, and 95 each coordinate a divalent metal cation.

Belongs to the SurE nucleotidase family. The cofactor is a divalent metal cation.

The protein localises to the cytoplasm. It catalyses the reaction a ribonucleoside 5'-phosphate + H2O = a ribonucleoside + phosphate. In terms of biological role, nucleotidase that shows phosphatase activity on nucleoside 5'-monophosphates. The protein is 5'-nucleotidase SurE of Cupriavidus pinatubonensis (strain JMP 134 / LMG 1197) (Cupriavidus necator (strain JMP 134)).